A 383-amino-acid chain; its full sequence is Probable sphingolipid long chain base-responsive protein pil2 (383 aa).

A Phosphoserine modification is found at Ser162. Disordered stretches follow at residues 292-336 (PRTD…EDYQ) and 356-383 (GEEDDEEVGSQGVAETSMPSTSAQPIAA). Residues 311–324 (TTSGTTHSYTSTGS) show a composition bias toward low complexity. Polar residues-rich tracts occupy residues 325–336 (KRYSQMGTEDYQ) and 368–383 (VAETSMPSTSAQPIAA).

Phosphorylated by ksg1 and ppk21. Phosphorylation is regulated by sphingolipid long chain bases (LCBs).

Functionally, negative regulator of cell wall integrity (CWI) in unstressed cells, probably by inhibiting protein kinase ksg1/ppk21 activity and regulating their downstream CWI pathways pck2-MAP kinase pathway and protein kinase gad8 pathway. Activity may be regulated by the transient increase of sphingolipid long chain bases (LCBs) during heat stress. This Schizosaccharomyces pombe (strain 972 / ATCC 24843) (Fission yeast) protein is Probable sphingolipid long chain base-responsive protein pil2 (pil2).